Here is a 78-residue protein sequence, read N- to C-terminus: Large ribosomal subunit protein uL29 (78 aa).

It belongs to the universal ribosomal protein uL29 family.

The protein is Large ribosomal subunit protein uL29 of Rhodococcus opacus (strain B4).